The sequence spans 319 residues: Secreted effector protein sopD2 (319 aa).

The Required to target late endocytic compartments motif lies at 37 to 44 (WDRFKDCF).

It belongs to the SopD family.

It localises to the secreted. Its subcellular location is the host cell membrane. Effector proteins function to alter host cell physiology and promote bacterial survival in host tissues. Contributes to the formation of Salmonella-induced filaments (Sifs) in infected epithelial cells and to replication in macrophages. In Salmonella typhimurium (strain LT2 / SGSC1412 / ATCC 700720), this protein is Secreted effector protein sopD2 (sopD2).